We begin with the raw amino-acid sequence, 319 residues long: Coiled-coil domain-containing protein PF3D7_1144200 (319 aa).

Residues 1–12 (MSEEHSNDHIED) are compositionally biased toward basic and acidic residues. Disordered stretches follow at residues 1–43 (MSEE…SESS) and 112–158 (KLEK…NQHN). Residues 16 to 26 (CSQNCDETNSP) show a composition bias toward polar residues. 2 stretches are compositionally biased toward basic and acidic residues: residues 27–36 (KNEKDEKDFK) and 112–131 (KLEK…KKVT). Coiled-coil stretches lie at residues 100 to 134 (DLAN…TNDS), 166 to 242 (ELNE…IKKN), and 281 to 310 (NSNC…LINI). Over residues 132–150 (NDSTNNKNKNNSVPFLNEN) the composition is skewed to low complexity.

This chain is Coiled-coil domain-containing protein PF3D7_1144200, found in Plasmodium falciparum (isolate 3D7).